Reading from the N-terminus, the 72-residue chain is Delta-actitoxin-Avd2b 3 (72 aa).

The signal sequence occupies residues 1 to 21; it reads MMSRLLVFLMLGAAFMLVVSA. Residues 22–42 constitute a propeptide that is removed on maturation; the sequence is NDAYGDEPAFKDLNQGDESLG. Cystine bridges form between cysteine 47/cysteine 62, cysteine 48/cysteine 56, and cysteine 50/cysteine 67.

It belongs to the sea anemone short toxin (type III) family.

Its subcellular location is the secreted. It localises to the nematocyst. Its function is as follows. Voltage-gated sodium channel (Nav) inhibitor. 1 uM completely inhibits insect voltage-gated sodium channel inactivation (DmNav1 from D.melanogaster). In Anemonia viridis (Snakelocks anemone), this protein is Delta-actitoxin-Avd2b 3.